The sequence spans 428 residues: D-amino acid dehydrogenase (428 aa).

3–17 lines the FAD pocket; that stretch reads VVILGSGVVGVASAY.

The protein belongs to the DadA oxidoreductase family. Requires FAD as cofactor.

It carries out the reaction a D-alpha-amino acid + A + H2O = a 2-oxocarboxylate + AH2 + NH4(+). The protein operates within amino-acid degradation; D-alanine degradation; NH(3) and pyruvate from D-alanine: step 1/1. Oxidative deamination of D-amino acids. The polypeptide is D-amino acid dehydrogenase (Burkholderia mallei (strain NCTC 10247)).